Reading from the N-terminus, the 811-residue chain is E3 ubiquitin-protein ligase RNF10 (811 aa).

Residues 1-10 are compositionally biased toward polar residues; sequence MPLSSPNAAA. The segment at 1–119 is disordered; that stretch reads MPLSSPNAAA…SFNGGRRDEV (119 aa). Serine 5 bears the Phosphoserine mark. Composition is skewed to low complexity over residues 18–31, 78–90, and 104–113; these read NSGS…SGSS, NNQS…QKSK, and SKLFSSSFNG. The segment at 101 to 185 is interaction with MEOX2; that stretch reads GGSSKLFSSS…FNKELFLQAN (85 aa). A phosphoserine mark is found at serine 110 and serine 128. Residues 225-267 form an RING-type zinc finger; sequence CPICLYPPTAAKITRCGHIFCWACILHYLSLSEKTWSKCPICY. The span at 653–662 shows a compositional bias: polar residues; it reads DSALGPTSTE. Disordered regions lie at residues 653 to 672, 724 to 761, and 776 to 811; these read DSAL…ISPL, DVWP…VPSF, and LDTP…VHTK. Residues 724–736 show a composition bias toward basic and acidic residues; that stretch reads DVWPKTAPKKDEN. Polar residues predominate over residues 802 to 811; that stretch reads LFSTSVVHTK.

This sequence belongs to the RNF10 family. Interacts with MEOX2.

The protein localises to the cytoplasm. The protein resides in the nucleus. The catalysed reaction is S-ubiquitinyl-[E2 ubiquitin-conjugating enzyme]-L-cysteine + [acceptor protein]-L-lysine = [E2 ubiquitin-conjugating enzyme]-L-cysteine + N(6)-ubiquitinyl-[acceptor protein]-L-lysine.. It participates in protein modification; protein ubiquitination. In terms of biological role, E3 ubiquitin-protein ligase that catalyzes monoubiquitination of 40S ribosomal proteins RPS2/us5 and RPS3/us3 in response to ribosome stalling. Part of a ribosome quality control that takes place when ribosomes have stalled during translation initiation (iRQC): RNF10 acts by mediating monoubiquitination of RPS2/us5 and RPS3/us3, promoting their degradation by the proteasome. Also promotes ubiquitination of 40S ribosomal proteins in response to ribosome stalling during translation elongation. The action of RNF10 in iRQC is counteracted by USP10. May also act as a transcriptional factor involved in the regulation of MAG (Myelin-associated glycoprotein) expression. Acts as a regulator of Schwann cell differentiation and myelination. This is E3 ubiquitin-protein ligase RNF10 from Homo sapiens (Human).